The chain runs to 275 residues: MAIVKVKPTSPGRRAMVKVVNKDLHKGKPHAALLDTQSSKAGRNNNGRITTRHQGGGHKHHYRVIDFRRTKDGIPAKVERLEYDPNRSANIALVLYADGERRYIIAPKGVTVGQQLMSGSEAPIRAGNTLPIRNIPVGTTIHCIEMLPGKGAQMARSAGTSAMLLAREGVYAQVRLRSGEIRRVHIECRATIGEVGNEEHSLRQIGKAGANRWRGIRPTVRGVAMNPIDHPHGGGEGRTAAGRDPVSPWGTPTKGFRTRRNKRTTTMIVQRRHKR.

A compositionally biased stretch (polar residues) spans 38 to 53 (SSKAGRNNNGRITTRH). Disordered stretches follow at residues 38 to 59 (SSKAGRNNNGRITTRHQGGGHK) and 224 to 257 (AMNPIDHPHGGGEGRTAAGRDPVSPWGTPTKGFR).

It belongs to the universal ribosomal protein uL2 family. Part of the 50S ribosomal subunit. Forms a bridge to the 30S subunit in the 70S ribosome.

Functionally, one of the primary rRNA binding proteins. Required for association of the 30S and 50S subunits to form the 70S ribosome, for tRNA binding and peptide bond formation. It has been suggested to have peptidyltransferase activity; this is somewhat controversial. Makes several contacts with the 16S rRNA in the 70S ribosome. The chain is Large ribosomal subunit protein uL2 from Burkholderia multivorans (strain ATCC 17616 / 249).